A 305-amino-acid polypeptide reads, in one-letter code: MIRQRTLKEIVKTTGVGLHSGRKVTLTLRPAAANTGIIYRRTDVNPPVDFPADPASVRDTMLCTALVNDEGVRISTVEHLNAALAGMGIDNIIVEVDAPEIPIMDGSASPFVYLLQQAGIETQNVPKRFIRIKKPVRFEDGDKWAEFVPFNGFRMDFEIEFNHPAIESDEQRLLFDFSSQGFVREISRARTFGFMRDIEYLQSQNLVLGGSFDNAIVLDDYRILNEEGLRFDNEFVTHKLLDAIGDLYMCGHAIIGEFRAFKSGHGLNNQLLRAVLADQEAWEWTTFEEEEGSPVAFAQPNMVLA.

The Zn(2+) site is built by His79, His238, and Asp242. The Proton donor role is filled by His265.

It belongs to the LpxC family. The cofactor is Zn(2+).

The catalysed reaction is a UDP-3-O-[(3R)-3-hydroxyacyl]-N-acetyl-alpha-D-glucosamine + H2O = a UDP-3-O-[(3R)-3-hydroxyacyl]-alpha-D-glucosamine + acetate. It functions in the pathway glycolipid biosynthesis; lipid IV(A) biosynthesis; lipid IV(A) from (3R)-3-hydroxytetradecanoyl-[acyl-carrier-protein] and UDP-N-acetyl-alpha-D-glucosamine: step 2/6. Catalyzes the hydrolysis of UDP-3-O-myristoyl-N-acetylglucosamine to form UDP-3-O-myristoylglucosamine and acetate, the committed step in lipid A biosynthesis. This chain is UDP-3-O-acyl-N-acetylglucosamine deacetylase, found in Vibrio campbellii (strain ATCC BAA-1116).